Reading from the N-terminus, the 547-residue chain is Chaperonin GroEL (547 aa).

Residues 30–33, Lys-51, 87–91, Gly-415, and Asp-496 contribute to the ATP site; these read TLGP and DGTTT. A disordered region spans residues 528-547; sequence KGGGAPAGGGMPGGMGDMDF.

It belongs to the chaperonin (HSP60) family. Forms a cylinder of 14 subunits composed of two heptameric rings stacked back-to-back. Interacts with the co-chaperonin GroES.

The protein resides in the cytoplasm. It carries out the reaction ATP + H2O + a folded polypeptide = ADP + phosphate + an unfolded polypeptide.. In terms of biological role, together with its co-chaperonin GroES, plays an essential role in assisting protein folding. The GroEL-GroES system forms a nano-cage that allows encapsulation of the non-native substrate proteins and provides a physical environment optimized to promote and accelerate protein folding. This Caulobacter vibrioides (strain ATCC 19089 / CIP 103742 / CB 15) (Caulobacter crescentus) protein is Chaperonin GroEL.